The following is a 652-amino-acid chain: ATP-dependent zinc metalloprotease FtsH 1 (652 aa).

Over 1 to 9 the chain is Cytoplasmic; the sequence is MSDNKWLRN. The helical transmembrane segment at 10–30 threads the bilayer; that stretch reads GFVWMILIIAAIAVWVTFVQG. At 31 to 110 the chain is on the extracellular side; it reads GRGGATITTQ…QTHRASQWGN (80 aa). The chain crosses the membrane as a helical span at residues 111-131; the sequence is VLGTLTFLLPTLFLIGVIIFM. Residues 132-652 are Cytoplasmic-facing; the sequence is MRQAQGTNNQ…VPHIKPQPAS (521 aa). 203–210 contacts ATP; that stretch reads GPPGTGKT. Histidine 425 provides a ligand contact to Zn(2+). Glutamate 426 is an active-site residue. Zn(2+)-binding residues include histidine 429 and aspartate 501. Residues 623 to 652 form a disordered region; sequence IATPETARPDSPSEARPAAPVPHIKPQPAS. A compositionally biased stretch (pro residues) spans 641–652; the sequence is APVPHIKPQPAS.

It in the central section; belongs to the AAA ATPase family. This sequence in the C-terminal section; belongs to the peptidase M41 family. As to quaternary structure, homohexamer. It depends on Zn(2+) as a cofactor.

Its subcellular location is the cell membrane. Its function is as follows. Acts as a processive, ATP-dependent zinc metallopeptidase for both cytoplasmic and membrane proteins. Plays a role in the quality control of integral membrane proteins. This Thermomicrobium roseum (strain ATCC 27502 / DSM 5159 / P-2) protein is ATP-dependent zinc metalloprotease FtsH 1.